We begin with the raw amino-acid sequence, 523 residues long: MAALRRLLWPPPRLSPTLAPQQPFLSPWGRPAGTAPGMSGRPFSGREEDEGAVAEAAWRRRRWGELSIAAAAGGGLVGLVCYQLYGDPRADPSELVAPELDESPRGRGLLPIPVAAAKETVATGRAVTEDLDLYATSRERRFRLFASIECEGQLFMTPYDFILAVTTDEPKFAKTWKSLSKQELSQMLSETPPVWKGSSKLFRNLKERGVISYTEYLFLLCILTKPHAGFRIAFNMFDTDGNEMVDKKEFLVLQEIFRKKNEKRETKGDEEKRAMLRLQLYGYHSPTNSVLKPDAEELVSRSYWDTLRRSTSQALFSDLAERADDITSLVADTTLLVHFFGKKGKAELNFEDFYRFMDNLQTEVLEIEFLSYSNGMNTISEEDFAHILLRYTNVENTSVFLENVRYSIPEEKGITFDEFRSFFQFLNNLEDFAIALNMYNFASRSIGQDEFKRAVYVATGLKLSPHLVNTVFKIFDVDKDDQLSYKEFIGIMKDRLHRGFRGYKTVQKYPTFKSCLKKELHSR.

Residues M1–R6 constitute a mitochondrion transit peptide. The disordered stretch occupies residues L18–E48. In terms of domain architecture, EF-hand 1 spans K225–K260. Ca(2+) contacts are provided by D238, D240, N242, M244, D246, and E249. The 16-residue stretch at I414–L429 folds into the EF-hand 2; degenerate domain. The EF-hand 3 domain occupies L463–R498. The Ca(2+) site is built by D476, D478, D480, Q482, and E487.

The protein belongs to the MICU1 family. MICU3 subfamily. Heterodimer; disulfide-linked; heterodimerizes with MICU1. Component of the uniplex complex, composed of MCU, EMRE/SMDT1, MICU1 and MICU3 in a 4:4:1:1 stoichiometry.

The protein resides in the mitochondrion intermembrane space. It is found in the mitochondrion inner membrane. Its function is as follows. Tissue-specific calcium sensor of the mitochondrial calcium uniporter (MCU) channel, which specifically regulates MCU channel activity in the central nervous system and skeletal muscle. Senses calcium level via its EF-hand domains: compared to MICU1 and MICU2, MICU3 has a higher affinity for calcium. MICU1 and MICU3 form a disulfide-linked heterodimer that stimulates and inhibits MCU activity, depending on the concentration of calcium. At low calcium levels, MICU1 occludes the pore of the MCU channel, preventing mitochondrial calcium uptake. At higher calcium levels, calcium-binding to MICU1 and MICU3 induces a conformational change that weakens MCU-MICU1 interactions and moves the MICU1-MICU3 heterodimer away from the pore, allowing calcium permeation through the MCU channel. The high calcium affinity of MICU3 lowers the calcium threshold necessary for calcium permeation through the MCU channel. The MICU1-MICU3 heterodimer promotes flexibility of neurotransmission in neuronal cells by enhancing mitochondrial calcium uptake in presynapses. It is also required to increase mitochondrial calcium uptake in skeletal muscle cells, thereby increasing ATP production. This Rattus norvegicus (Rat) protein is Calcium uptake protein 3, mitochondrial.